Here is a 221-residue protein sequence, read N- to C-terminus: Chalcone--flavanone isomerase (221 aa).

Residues threonine 47, asparagine 112, and serine 189 each coordinate substrate.

This sequence belongs to the chalcone isomerase family.

The catalysed reaction is a chalcone = a flavanone.. The protein operates within secondary metabolite biosynthesis; flavonoid biosynthesis. Its function is as follows. Catalyzes the intramolecular cyclization of bicyclic chalcones into tricyclic (S)-flavanones. Responsible for the isomerization of 4,2',4',6'-tetrahydroxychalcone (also termed chalcone) into naringenin. This chain is Chalcone--flavanone isomerase (CHI), found in Dianthus caryophyllus (Carnation).